A 394-amino-acid polypeptide reads, in one-letter code: Elongation factor Tu (394 aa).

The 195-residue stretch at 10–204 (KPHVNVGTIG…ALDSYIPEPE (195 aa)) folds into the tr-type G domain. The G1 stretch occupies residues 19–26 (GHVDHGKT). 19–26 (GHVDHGKT) is a GTP binding site. Mg(2+) is bound at residue T26. The segment at 60–64 (GITIN) is G2. Residues 81-84 (DCPG) form a G3 region. Residues 81 to 85 (DCPGH) and 136 to 139 (NKCD) each bind GTP. A G4 region spans residues 136–139 (NKCD). The interval 174–176 (SAL) is G5.

It belongs to the TRAFAC class translation factor GTPase superfamily. Classic translation factor GTPase family. EF-Tu/EF-1A subfamily. Monomer.

It is found in the cytoplasm. It catalyses the reaction GTP + H2O = GDP + phosphate + H(+). In terms of biological role, GTP hydrolase that promotes the GTP-dependent binding of aminoacyl-tRNA to the A-site of ribosomes during protein biosynthesis. The protein is Elongation factor Tu of Sodalis glossinidius (strain morsitans).